A 567-amino-acid polypeptide reads, in one-letter code: Dihydroxy-acid dehydratase 1 (567 aa).

Cys57 provides a ligand contact to [2Fe-2S] cluster. A Mg(2+)-binding site is contributed by Asp89. Cys130 lines the [2Fe-2S] cluster pocket. Mg(2+) is bound by residues Asp131 and Lys132. Lys132 carries the post-translational modification N6-carboxylysine. [2Fe-2S] cluster is bound at residue Cys202. Mg(2+) is bound at residue Glu454. The active-site Proton acceptor is Ser480.

It belongs to the IlvD/Edd family. Homodimer. It depends on [2Fe-2S] cluster as a cofactor. Requires Mg(2+) as cofactor.

The enzyme catalyses (2R)-2,3-dihydroxy-3-methylbutanoate = 3-methyl-2-oxobutanoate + H2O. It carries out the reaction (2R,3R)-2,3-dihydroxy-3-methylpentanoate = (S)-3-methyl-2-oxopentanoate + H2O. The protein operates within amino-acid biosynthesis; L-isoleucine biosynthesis; L-isoleucine from 2-oxobutanoate: step 3/4. Its pathway is amino-acid biosynthesis; L-valine biosynthesis; L-valine from pyruvate: step 3/4. Functions in the biosynthesis of branched-chain amino acids. Catalyzes the dehydration of (2R,3R)-2,3-dihydroxy-3-methylpentanoate (2,3-dihydroxy-3-methylvalerate) into 2-oxo-3-methylpentanoate (2-oxo-3-methylvalerate) and of (2R)-2,3-dihydroxy-3-methylbutanoate (2,3-dihydroxyisovalerate) into 2-oxo-3-methylbutanoate (2-oxoisovalerate), the penultimate precursor to L-isoleucine and L-valine, respectively. This Aromatoleum aromaticum (strain DSM 19018 / LMG 30748 / EbN1) (Azoarcus sp. (strain EbN1)) protein is Dihydroxy-acid dehydratase 1.